The sequence spans 717 residues: ATP-dependent zinc metalloprotease FtsH (717 aa).

The Cytoplasmic portion of the chain corresponds to 1 to 7 (MFKDKKM). A helical transmembrane segment spans residues 8–28 (LKYIVIYSIIAFGILLTFNMV). Residues 29–109 (KDEMLYEKVD…VEFNVTKPEN (81 aa)) lie on the Extracellular side of the membrane. A helical membrane pass occupies residues 110-130 (YQLLGLLMSWVFPLILIFFVG). Residues 131–717 (RMMFSKMNNK…SSTNNKVDGE (587 aa)) lie on the Cytoplasmic side of the membrane. 206-213 (GPPGTGKT) contributes to the ATP binding site. His-427 is a binding site for Zn(2+). Glu-428 is an active-site residue. Positions 431 and 504 each coordinate Zn(2+). The tract at residues 670–717 (KLARANNEANNDALDSSKENEEVKSNVNDGATEEKKDDSSTNNKVDGE) is disordered. 2 stretches are compositionally biased toward basic and acidic residues: residues 684–693 (DSSKENEEVK) and 701–717 (TEEK…VDGE).

In the central section; belongs to the AAA ATPase family. The protein in the C-terminal section; belongs to the peptidase M41 family. As to quaternary structure, homohexamer. Zn(2+) is required as a cofactor.

Its subcellular location is the cell membrane. Functionally, acts as a processive, ATP-dependent zinc metallopeptidase for both cytoplasmic and membrane proteins. Plays a role in the quality control of integral membrane proteins. The protein is ATP-dependent zinc metalloprotease FtsH of Clostridium perfringens (strain ATCC 13124 / DSM 756 / JCM 1290 / NCIMB 6125 / NCTC 8237 / Type A).